Consider the following 251-residue polypeptide: Aspartate/glutamate leucyltransferase (251 aa).

This sequence belongs to the R-transferase family. Bpt subfamily.

The protein localises to the cytoplasm. The catalysed reaction is N-terminal L-glutamyl-[protein] + L-leucyl-tRNA(Leu) = N-terminal L-leucyl-L-glutamyl-[protein] + tRNA(Leu) + H(+). It catalyses the reaction N-terminal L-aspartyl-[protein] + L-leucyl-tRNA(Leu) = N-terminal L-leucyl-L-aspartyl-[protein] + tRNA(Leu) + H(+). Functions in the N-end rule pathway of protein degradation where it conjugates Leu from its aminoacyl-tRNA to the N-termini of proteins containing an N-terminal aspartate or glutamate. The sequence is that of Aspartate/glutamate leucyltransferase from Stenotrophomonas maltophilia (strain R551-3).